The sequence spans 84 residues: Small ribosomal subunit protein bS20 (84 aa).

It belongs to the bacterial ribosomal protein bS20 family.

In terms of biological role, binds directly to 16S ribosomal RNA. This Latilactobacillus sakei subsp. sakei (strain 23K) (Lactobacillus sakei subsp. sakei) protein is Small ribosomal subunit protein bS20.